A 268-amino-acid chain; its full sequence is Undecaprenyl-diphosphatase 1 (268 aa).

A run of 7 helical transmembrane segments spans residues 5-25 (TIVEALLLGLLEGLTEFIPVS), 43-63 (GKAFEILIQLGAILAILSVYF), 81-101 (HFVIGILIAFLPAAIIGALAH), 107-127 (VLFESPRLICTMLIIGGVILL), 185-205 (AEFSFFLAIPTMVGAFAFDLF), 214-234 (ADLPIIAIGFVAAFVTALFVV), and 248-268 (LFGWWRLVVGIVGLVALMIWG).

It belongs to the UppP family.

The protein localises to the cell inner membrane. The catalysed reaction is di-trans,octa-cis-undecaprenyl diphosphate + H2O = di-trans,octa-cis-undecaprenyl phosphate + phosphate + H(+). In terms of biological role, catalyzes the dephosphorylation of undecaprenyl diphosphate (UPP). Confers resistance to bacitracin. In Mesorhizobium japonicum (strain LMG 29417 / CECT 9101 / MAFF 303099) (Mesorhizobium loti (strain MAFF 303099)), this protein is Undecaprenyl-diphosphatase 1.